The following is a 200-amino-acid chain: Somatotropin (200 aa).

The first 22 residues, 1–22, serve as a signal peptide directing secretion; that stretch reads MARVLVVLSVVVASLFFSQGAT. Histidine 38 serves as a coordination point for Zn(2+). A disulfide bond links cysteine 71 and cysteine 173. Position 182 (glutamate 182) interacts with Zn(2+). The cysteines at positions 190 and 198 are disulfide-linked.

The protein belongs to the somatotropin/prolactin family.

The protein localises to the secreted. Functionally, growth hormone plays an important role in growth control and is involved in the regulation of several anabolic processes. Implicated as an osmoregulatory substance important for seawater adaptation. This chain is Somatotropin (gh), found in Pangasianodon gigas (Mekong giant catfish).